We begin with the raw amino-acid sequence, 467 residues long: Glutamate--tRNA ligase (467 aa).

The short motif at 13-23 (PSPTGFLHLGG) is the 'HIGH' region element. Residues 118–133 (ARGDKPRYDGTWRPEP) are compositionally biased toward basic and acidic residues. The interval 118–141 (ARGDKPRYDGTWRPEPGKTLPAIP) is disordered. The short motif at 245–249 (KLSKR) is the 'KMSKS' region element. An ATP-binding site is contributed by K248.

This sequence belongs to the class-I aminoacyl-tRNA synthetase family. Glutamate--tRNA ligase type 1 subfamily. Monomer.

It is found in the cytoplasm. It catalyses the reaction tRNA(Glu) + L-glutamate + ATP = L-glutamyl-tRNA(Glu) + AMP + diphosphate. Catalyzes the attachment of glutamate to tRNA(Glu) in a two-step reaction: glutamate is first activated by ATP to form Glu-AMP and then transferred to the acceptor end of tRNA(Glu). The sequence is that of Glutamate--tRNA ligase from Bordetella avium (strain 197N).